We begin with the raw amino-acid sequence, 212 residues long: Ribonuclease HII (212 aa).

The RNase H type-2 domain maps to 2 to 206 (TPLVGVDEAG…CERIRAEAEQ (205 aa)). The a divalent metal cation site is built by aspartate 8, glutamate 9, and aspartate 101.

This sequence belongs to the RNase HII family. Mn(2+) is required as a cofactor. The cofactor is Mg(2+).

It is found in the cytoplasm. The enzyme catalyses Endonucleolytic cleavage to 5'-phosphomonoester.. Functionally, endonuclease that specifically degrades the RNA of RNA-DNA hybrids. This chain is Ribonuclease HII, found in Natronomonas pharaonis (strain ATCC 35678 / DSM 2160 / CIP 103997 / JCM 8858 / NBRC 14720 / NCIMB 2260 / Gabara) (Halobacterium pharaonis).